A 957-amino-acid chain; its full sequence is Plasma membrane ATPase 1 (957 aa).

Residues 1–66 (MGEEKPEVLD…EKKDSKLLKF (66 aa)) are Cytoplasmic-facing. Residues 67-86 (LGFMWNPLSWVMEAAAIMAI) form a helical membrane-spanning segment. Over 87–98 (ALANGGGKPPDW) the chain is Extracellular. The chain crosses the membrane as a helical span at residues 99–119 (QDFVGIITLLIINSTISFIEE). Over 120–248 (NNAGNAAAAL…GHFQKVLTAI (129 aa)) the chain is Cytoplasmic. A helical membrane pass occupies residues 249–269 (GNFCICSIAVGMIIEIIVMYP). Residues 270-279 (IQHRAYRPGI) lie on the Extracellular side of the membrane. A helical transmembrane segment spans residues 280–301 (DNLLVLLIGGIPIAMPTVLSVT). Over 302–648 (MAIGSHRLAQ…TSRAIFQRMK (347 aa)) the chain is Cytoplasmic. The active-site 4-aspartylphosphate intermediate is aspartate 334. Positions 593 and 597 each coordinate Mg(2+). Residues 649–670 (NYTIYAVSITIRIVLGFMLLAL) form a helical membrane-spanning segment. Residues 671-675 (IWKFD) lie on the Extracellular side of the membrane. A helical membrane pass occupies residues 676 to 698 (FPPFMVLIIAILNDGTIMTISKD). Topologically, residues 699–714 (RVKPSPLPDSWKLAEI) are cytoplasmic. A helical membrane pass occupies residues 715 to 735 (FTTGIVLGGYLAMMTVIFFWA). Over 736 to 760 (AYKTNFFPHVFGVSTLEKTATDDFR) the chain is Extracellular. A helical membrane pass occupies residues 761–781 (KLASAIYLQVSIISQALIFVT). Over 782-793 (RSRSWSFVERPG) the chain is Cytoplasmic. The chain crosses the membrane as a helical span at residues 794 to 814 (FLLVIAFVIAQLVATLIAVYA). Residues 815–823 (NWSFAAIEG) lie on the Extracellular side of the membrane. The chain crosses the membrane as a helical span at residues 824 to 844 (IGWGWAGVIWIYNLVFYIPLD). Over 845–957 (IIKFFIRYAL…IETIQQAYTV (113 aa)) the chain is Cytoplasmic.

This sequence belongs to the cation transport ATPase (P-type) (TC 3.A.3) family. Type IIIA subfamily. As to expression, expressed in roots, stems, leaves from both vegetative and flowering plants, and flowers at early and late stages of development with highest expression levels found in flowers and stem.

It is found in the cell membrane. It carries out the reaction ATP + H2O + H(+)(in) = ADP + phosphate + 2 H(+)(out). In terms of biological role, the plasma membrane ATPase of plants and fungi is a hydrogen ion pump. The proton gradient it generates drives the active transport of nutrients by H(+)-symport. The resulting external acidification and/or internal alkinization may mediate growth responses. This chain is Plasma membrane ATPase 1 (PMA1), found in Nicotiana plumbaginifolia (Leadwort-leaved tobacco).